We begin with the raw amino-acid sequence, 981 residues long: Rab3 GTPase-activating protein catalytic subunit (981 aa).

Phosphoserine occurs at positions 83, 379, 536, 579, 581, and 590. A disordered region spans residues 532–558 (GKKTSLSDSTTSAYPGDAGKTGGQLGL). Positions 591–614 (DTEDLKGNGQESGKKGGPKEMANL) are disordered. At Ser-664 the chain carries Phosphoserine.

Belongs to the Rab3-GAP catalytic subunit family. In terms of assembly, the Rab3 GTPase-activating complex is a heterodimer composed of Rab3gap1 and Rab3gap2. The Rab3 GTPase-activating complex interacts with DMXL2. Interacts with LMAN1. As to expression, in the eye, it is highly expressed within the lens, particularly in the anterior lens epithelium and in a ring corresponding to the equatorial region where anterior cells are differentiating into lens fibers. Also highly expressed in the retina.

It is found in the cytoplasm. It localises to the endoplasmic reticulum. The protein resides in the golgi apparatus. The protein localises to the cis-Golgi network. Catalytic subunit of the Rab3 GTPase-activating (Rab3GAP) complex composed of RAB3GAP1 and RAB3GAP2, which has GTPase-activating protein (GAP) activity towards various Rab3 subfamily members (RAB3A, RAB3B, RAB3C and RAB3D), RAB5A and RAB43, and guanine nucleotide exchange factor (GEF) activity towards RAB18. As part of the Rab3GAP complex, acts as a GAP for Rab3 proteins by converting active RAB3-GTP to the inactive form RAB3-GDP. Rab3 proteins are involved in regulated exocytosis of neurotransmitters and hormones. The Rab3GAP complex, acts as a GEF for RAB18 by promoting the conversion of inactive RAB18-GDP to the active form RAB18-GTP. Recruits and stabilizes RAB18 at the cis-Golgi membrane where RAB18 is most likely activated. Also involved in RAB18 recruitment at the endoplasmic reticulum (ER) membrane where it maintains proper ER structure. Required for normal eye and brain development. May participate in neurodevelopmental processes such as proliferation, migration and differentiation before synapse formation, and non-synaptic vesicular release of neurotransmitters. The sequence is that of Rab3 GTPase-activating protein catalytic subunit from Mus musculus (Mouse).